Consider the following 268-residue polypeptide: tRNA threonylcarbamoyladenosine dehydratase (268 aa).

A helical membrane pass occupies residues 237–257 (GFGAATMVTATFGFVAVSHAL).

This sequence belongs to the HesA/MoeB/ThiF family. As to quaternary structure, interacts with CsdE.

The protein localises to the membrane. In terms of biological role, catalyzes the ATP-dependent dehydration of threonylcarbamoyladenosine at position 37 (t(6)A37) to form cyclic t(6)A37 (ct(6)A37) in tRNAs that read codons beginning with adenine. TcdA is also part of a sulfur transfer pathway; is able to accept sulfur from CsdA directly in vitro, but CsdE might act as the sulfur donor in vivo. This chain is tRNA threonylcarbamoyladenosine dehydratase (tcdA), found in Escherichia coli (strain K12).